A 73-amino-acid chain; its full sequence is Heterin-2 (73 aa).

The signal sequence occupies residues 1-22 (MQYKTFLVIFLAYLLVTEEALA). A propeptide spanning residues 47 to 73 (KRALKNIFDPYQKNLDLELERLLSQLQ) is cleaved from the precursor.

Belongs to the non-disulfide-bridged peptide (NDBP) superfamily. Medium-length antimicrobial peptide (group 3) family. In terms of tissue distribution, expressed by the venom gland.

It localises to the secreted. Its subcellular location is the target cell membrane. Its function is as follows. Amphipathic peptide with potent activities against Gram-positive bacteria (MIC=5.6-30.0 uM) and weaker activities against the tested Gram-negative bacteria (MIC=15 uM to &gt;45 uM). It has high hemolytic activity against human erythrocytes. May act by disrupting the integrity of the bacterial cell membrane. The chain is Heterin-2 from Heterometrus spinifer (Asia giant forest scorpion).